The following is a 91-amino-acid chain: ATP synthase subunit c (91 aa).

2 helical membrane passes run 4 to 24 and 53 to 73; these read FTMCVLAAGIGMALGTLGTGI and IGLAMIESLAIYALVVCLIIL.

The protein belongs to the ATPase C chain family. In terms of assembly, F-type ATPases have 2 components, F(1) - the catalytic core - and F(0) - the membrane proton channel. F(1) has five subunits: alpha(3), beta(3), gamma(1), delta(1), epsilon(1). F(0) has three main subunits: a(1), b(2) and c(10-14). The alpha and beta chains form an alternating ring which encloses part of the gamma chain. F(1) is attached to F(0) by a central stalk formed by the gamma and epsilon chains, while a peripheral stalk is formed by the delta and b chains.

It is found in the cell inner membrane. In terms of biological role, f(1)F(0) ATP synthase produces ATP from ADP in the presence of a proton or sodium gradient. F-type ATPases consist of two structural domains, F(1) containing the extramembraneous catalytic core and F(0) containing the membrane proton channel, linked together by a central stalk and a peripheral stalk. During catalysis, ATP synthesis in the catalytic domain of F(1) is coupled via a rotary mechanism of the central stalk subunits to proton translocation. Functionally, key component of the F(0) channel; it plays a direct role in translocation across the membrane. A homomeric c-ring of between 10-14 subunits forms the central stalk rotor element with the F(1) delta and epsilon subunits. The polypeptide is ATP synthase subunit c (Geotalea daltonii (strain DSM 22248 / JCM 15807 / FRC-32) (Geobacter daltonii)).